Here is a 56-residue protein sequence, read N- to C-terminus: TauPI-stichotoxin-Hcr2d (56 aa).

Residues 4-54 (CLEPKVVGPCTAYFPRFYFNSETGKCTPFIYGGCEGNGNNFETLRACRGIC) enclose the BPTI/Kunitz inhibitor domain. Intrachain disulfides connect Cys-4-Cys-54, Cys-13-Cys-37, and Cys-29-Cys-50.

Belongs to the venom Kunitz-type family. Sea anemone type 2 potassium channel toxin subfamily.

The protein localises to the secreted. It localises to the nematocyst. Its function is as follows. This protease inhibitor shows two different activities, it inhibits both the capsaicin receptor TRPV1 and serine proteases. It partially blocks the capsaicin- and acid-induced response of TRPV1, a receptor of the pain pathway. It also weakly inhibits trypsin and chymotrypsin activity (Ki=0.5 uM and Ki=7 uM, respectively). In addition, it may also alter tachykinin levels by suppressing endogenous proteases. In vivo, it shows antinociceptive and analgesic activities. It significantly prolongs paw withdrawal latency and blocks heat-induced and chemical-induced acute pain. In addition, it also shows anti-inflammatory and analgesic effects in models of osteoarthritis and rheumatoid arthritis. In vivo, unlike other TRPV1 antagonists whose activity is associated with hyperthermia, this protein has the remarkable feature of dropping core body temperature. In Radianthus crispa (Leathery sea anemone), this protein is TauPI-stichotoxin-Hcr2d.